Here is a 410-residue protein sequence, read N- to C-terminus: S-adenosylmethionine synthase (410 aa).

Position 15 (His15) interacts with ATP. A Mg(2+)-binding site is contributed by Asp17. Glu43 serves as a coordination point for K(+). L-methionine is bound by residues Glu56 and Gln100. Residues 100 to 110 (QSPDIAKGVDT) form a flexible loop region. Residues 171-173 (DGK), 248-249 (KF), Asp257, 263-264 (RK), Ala280, and Lys284 contribute to the ATP site. Position 257 (Asp257) interacts with L-methionine. L-methionine is bound at residue Lys288.

The protein belongs to the AdoMet synthase family. Homotetramer; dimer of dimers. Mg(2+) is required as a cofactor. Requires K(+) as cofactor.

Its subcellular location is the cytoplasm. The enzyme catalyses L-methionine + ATP + H2O = S-adenosyl-L-methionine + phosphate + diphosphate. The protein operates within amino-acid biosynthesis; S-adenosyl-L-methionine biosynthesis; S-adenosyl-L-methionine from L-methionine: step 1/1. Its function is as follows. Catalyzes the formation of S-adenosylmethionine (AdoMet) from methionine and ATP. The overall synthetic reaction is composed of two sequential steps, AdoMet formation and the subsequent tripolyphosphate hydrolysis which occurs prior to release of AdoMet from the enzyme. The chain is S-adenosylmethionine synthase from Prochlorococcus marinus (strain MIT 9211).